The chain runs to 1036 residues: uncharacterized protein (1036 aa).

A signal peptide spans methionine 1–alanine 24. Residues glycine 1011 to leucine 1033 traverse the membrane as a helical segment.

It localises to the membrane. This is an uncharacterized protein from Archaeoglobus fulgidus (strain ATCC 49558 / DSM 4304 / JCM 9628 / NBRC 100126 / VC-16).